Here is a 261-residue protein sequence, read N- to C-terminus: MPAKTRNVLIACSDYYGPFYKDGENTGAFFLELLHPYLVFRDACFNVDIVTESGKIQFDDHSVAGPAIDKGSKGEEFLSYDDHIASGPELSKAEKYVLENKDDMFWRIVQNSKTADEVNPDKYDIFFVAGGHATLFDFPKATNLQKLGTSIYENGGVVAAVCHGPTLLPFMKRQTSDGSVSIVCGKDVTAFDRVAEDKSKLMEALKKYNLEVLDDMLNDAGANFIKSPNPFGDFVIADGRLVTGSNPASATSTAKTALRVL.

Residues Cys162, His163, and Glu196 contribute to the active site.

Belongs to the peptidase C56 family. HSP31-like subfamily.

It catalyses the reaction methylglyoxal + H2O = (R)-lactate + H(+). Catalyzes the conversion of methylglyoxal (MG) to D-lactate in a single glutathione (GSH)-independent step. May play a role in detoxifying endogenously produced glyoxals. Involved in protection against reactive oxygen species (ROS). In Schizosaccharomyces pombe (strain 972 / ATCC 24843) (Fission yeast), this protein is Probable glutathione-independent glyoxalase hsp3103.